Reading from the N-terminus, the 314-residue chain is Malate dehydrogenase (314 aa).

NAD(+) contacts are provided by residues 7-13 (GAAGGIG) and D34. The substrate site is built by R81 and R87. NAD(+)-binding positions include N94 and 117–119 (ITN). Residues N119 and R153 each coordinate substrate. The active-site Proton acceptor is the H177. Position 230 (M230) interacts with NAD(+).

The protein belongs to the LDH/MDH superfamily. MDH type 1 family. In terms of assembly, homodimer.

It carries out the reaction (S)-malate + NAD(+) = oxaloacetate + NADH + H(+). In terms of biological role, catalyzes the reversible oxidation of malate to oxaloacetate. The polypeptide is Malate dehydrogenase (Glaesserella parasuis serovar 5 (strain SH0165) (Haemophilus parasuis)).